We begin with the raw amino-acid sequence, 259 residues long: Phosphatidylglycerol--prolipoprotein diacylglyceryl transferase (259 aa).

A run of 4 helical transmembrane segments spans residues 9-29 (IIFS…VIGI), 55-75 (FITY…VLLY), 92-112 (EGGM…YLFC), and 117-137 (INFL…LFLG). R138 contributes to the a 1,2-diacyl-sn-glycero-3-phospho-(1'-sn-glycerol) binding site. 3 helical membrane passes run 172–192 (QLYE…YTTF), 201–221 (GLNS…IEIF), and 228–248 (IGFI…MLLL).

Belongs to the Lgt family.

The protein resides in the cell inner membrane. The enzyme catalyses L-cysteinyl-[prolipoprotein] + a 1,2-diacyl-sn-glycero-3-phospho-(1'-sn-glycerol) = an S-1,2-diacyl-sn-glyceryl-L-cysteinyl-[prolipoprotein] + sn-glycerol 1-phosphate + H(+). It functions in the pathway protein modification; lipoprotein biosynthesis (diacylglyceryl transfer). Catalyzes the transfer of the diacylglyceryl group from phosphatidylglycerol to the sulfhydryl group of the N-terminal cysteine of a prolipoprotein, the first step in the formation of mature lipoproteins. This Rickettsia conorii (strain ATCC VR-613 / Malish 7) protein is Phosphatidylglycerol--prolipoprotein diacylglyceryl transferase.